An 87-amino-acid polypeptide reads, in one-letter code: Small ribosomal subunit protein bS20 (87 aa).

The tract at residues 1 to 22 (MANIKSQIKRNKTNEKARLRNQ) is disordered.

This sequence belongs to the bacterial ribosomal protein bS20 family.

Its function is as follows. Binds directly to 16S ribosomal RNA. This chain is Small ribosomal subunit protein bS20, found in Corynebacterium glutamicum (strain R).